We begin with the raw amino-acid sequence, 149 residues long: Nucleoside diphosphate kinase 1 (149 aa).

Residues K9, F57, R85, T91, R102, and N112 each coordinate ATP. H115 functions as the Pros-phosphohistidine intermediate in the catalytic mechanism.

This sequence belongs to the NDK family. Requires Mg(2+) as cofactor. Post-translationally, autophosphorylated.

The catalysed reaction is a 2'-deoxyribonucleoside 5'-diphosphate + ATP = a 2'-deoxyribonucleoside 5'-triphosphate + ADP. The enzyme catalyses a ribonucleoside 5'-diphosphate + ATP = a ribonucleoside 5'-triphosphate + ADP. Its function is as follows. Major role in the synthesis of nucleoside triphosphates other than ATP. The ATP gamma phosphate is transferred to the NDP beta phosphate via a ping-pong mechanism, using a phosphorylated active-site intermediate. Also exhibits a kinase-like activity towards histone H1. The polypeptide is Nucleoside diphosphate kinase 1 (NDPK1) (Saccharum officinarum (Sugarcane)).